The sequence spans 2023 residues: MDITVSELMSNFMDSPLVVWVKTFGPLGFSSEDKLSMFMDLVDGVFLHKIMTHIDPSPMNQRVNKQVNNDVNLRIQNLNTVIRHIKNYYQEHLQQLIVMNLPNVLAIAKDPLSGKSMEEMKRMLLLILGCAVQCDRKEEIIEKIKLLDIETQAAIVTHIQEVTHNQENVLDLQWMEVAEIPAEQLDPLSRTMAFHLRKLIDERDESAELVIELTQERDYLQSQQPSGLLGFPSPERTSLSPITLLSKEDRQHLAVELADTKAKLRRSRQELEEKTEQLIDAKNEIERLDSDIQKLKQENTQLLAEARSVRAYRDEVDSLRERAGKVDRLETELSRFKEKLNDVHFYKTRIEELREDNLTLLETKSMLEEQLTGARGRCDKLHELEKENLQLRSKLHDIEIDRDSDKKRLEELLEENMLLEISQKQSMNESAHLGWELEQLAKNNEVNEARKSFVFELNESASSRLLKLEKENQCLQSTIQELREASINMEEGQLHSLELEKENQSLSKKLERLQSQLDQEKQTTQDMENLGEELIKEKQRMEKTLETIQAEKDRQISELEQEKEHLTQAVSSLRKRAQANSEARVREVETENRILHQTISETGGKLARLEAEKRQVTKELESLRERGERCEELEREVPRLERVREQLQREAAALKIGSERAEALERENATLEQDNRRLKKLADTAQNATLRLAVLEKDHQQLEEENLEQRRALETLRPAAARLAQLQQEHAELEREHEEMCRTMEELRSQAKRSERLEKSCGSLSLENQRLQQTLENSSTKMQGLESELRQNEAEMKDLQRELEGLRQKVTWAETLEKENRGMEQELSQLEKEKKQLEKEARRFRQQLEVKEAALEENCLRLASMEKEGTALSKELGRVKEAAGRLKELERENKDLQKQATMDKKTLATLREELVNEKLRVQQQCNELEKLSHELEKIGLNREKLLQEEHSCEDNKYKILETKIESALKKTLELREEKIQSLESRLEESSSLNQQLRTELTTVKKNLEALKQRHEEEAAHSEISQQTLGQTRSLPDKEKWEMEQREATAELLKLKDRLIDVEKNVRQRHVSIDIHRVIFSIVICFCDSLQNAALQTEKYLLKDQLKQIDSQNAQLNAQTLALQKQAASLQEHNTSLHKETAKLQVENSTLSSQSSSLMAQYGALQAQLQTLESEAESLQKQREEASAARDRVTQDHERLLGVHERQASEYEQLIAQHAALKASQRALEQENRTLENKYMVLLKQKDAMEALEESLQRDRESLGEEIRKNTLILGENRSLREEVDRVSHMHTQLRQEYDSLQLQTKELKTSLNESQLELNRWQARYDQLKEQHQGLDISMTKLDNHCELLTRLKGNLEEENHHLLSQIQMLSQQNQTLLERTMESKELYHEEQKQYIDKLNSLRRQKEKLEEKIMDQYKFYDPTPKKSRQWVGAKAIAKFIKPKKESSRERPDAPRERIRSAPDIPLPEIPTCIDCPESAPPPPPPPLPPRQSRPSLDSMNSQSVEENHVQSPTLSSPALNGRVLNESGGSRSRDGYRSIGGGSESMNGYEELLRWRSREPGGATCSTPLSRNSHNAPGFTSSSSLRPGRRPKGLVSEEDLRHHSPDAGFGSGVHGNTGHRPSSAEFSRNTSSSNSPVSSKGSLDCLQGRSASLSSDDVVGLAHEGSRLSQSSLLPRSSTLPCDSPSASRPSQRPASRRPSSPGSEMVTLEEFLQESNALSPPTVQTGSREDLMTDYFTRSTRPVPLRDGAKTPTNYVTPTVKTTPPELDARTPKPGHSVKPSVRLTDTSTPPSHSQTLPNRGAGLRPSALQQSSPRGSVGGSASLSRTFSLASADLLRSNGPDSYRTEAASPNQNDVVMRRPGAVARERPMSARVTGSSPLPGDPGHISVDPRRLSLAQPRDEFSLVSPPPLHSSSMSLQAEREYVGSGSSRAGAARSGSAQPRGAPHRGEVAMVTPVRAVPALRLNDLEEEPQEQREAESPLLKKADTTNLSYASKEQPTSKPASPDPNNDPQTVWYEYGCV.

Positions 11–131 (NFMDSPLVVW…RMLLLILGCA (121 aa)) constitute a Calponin-homology (CH) domain. Coiled-coil stretches lie at residues 250–415 (RQHL…LLEE), 458–1064 (NESA…VEKN), and 1105–1419 (LKQI…QYKF). Positions 1013–1035 (RHEEEAAHSEISQQTLGQTRSLP) are disordered. The span at 1022-1033 (EISQQTLGQTRS) shows a compositional bias: polar residues. Disordered stretches follow at residues 1441–1824 (KPKK…GSAS) and 1837–2023 (LRSN…YGCV). Over residues 1442–1460 (PKKESSRERPDAPRERIRS) the composition is skewed to basic and acidic residues. The segment covering 1478-1491 (SAPPPPPPPLPPRQ) has biased composition (pro residues). Polar residues-rich tracts occupy residues 1497–1518 (DSMN…SSPA) and 1564–1585 (TCST…SSSL). 2 stretches are compositionally biased toward low complexity: residues 1623–1643 (SAEF…KGSL) and 1667–1704 (RLSQ…SPGS). The short motif at 1700-1728 (SSPGSEMVTLEEFLQESNALSPPTVQTGS) is the GBA element. Composition is skewed to polar residues over residues 1714–1727 (QESN…VQTG), 1752–1763 (TPTNYVTPTVKT), 1785–1799 (LTDT…QTLP), and 1809–1824 (ALQQ…GSAS). Basic and acidic residues predominate over residues 1890 to 1904 (VDPRRLSLAQPRDEF). The span at 1927 to 1945 (GSGSSRAGAARSGSAQPRG) shows a compositional bias: low complexity. A compositionally biased stretch (basic and acidic residues) spans 1974 to 1988 (QEQREAESPLLKKAD). Polar residues predominate over residues 1989–2014 (TTNLSYASKEQPTSKPASPDPNNDPQ). Positions 2020 to 2023 (YGCV) match the PDZ-binding motif.

This sequence belongs to the CCDC88 family.

The protein resides in the cytoplasm. It is found in the cell junction. In terms of biological role, positive regulator of Wnt signaling, acting synergistically with dvl2. Functions upstream of ctnnb1/beta-catenin in the canonical Wnt pathway, and also activates jnk in the Wnt/planar cell polarity (PCP) pathway. Acts as a non-receptor guanine nucleotide exchange factor which binds to and activates guanine nucleotide-binding protein G(i) alpha (Gi-alpha) subunits. This promotes apical cell constriction and subsequent bending of the neural plate during neurulation via arhgef18. The protein is Protein Daple of Danio rerio (Zebrafish).